A 108-amino-acid polypeptide reads, in one-letter code: uncharacterized protein (108 aa).

Positions 7-106 (CPRFEKAVDI…WATEWIDPSF (100 aa)) constitute an HTH hxlR-type domain.

This is an uncharacterized protein from Bacillus subtilis (strain 168).